The following is a 574-amino-acid chain: 5'-nucleotidase (574 aa).

The N-terminal stretch at Met1–Pro26 is a signal peptide. Asp36 and His38 together coordinate Zn(2+). Cys51 and Cys57 are oxidised to a cystine. N-linked (GlcNAc...) asparagine glycosylation occurs at Asn53. Zn(2+) is bound by residues Asp85, Asn117, His220, and His243. N-linked (GlcNAc...) asparagine glycosylation is found at Asn311 and Asn333. 2 disulfides stabilise this stretch: Cys353/Cys358 and Cys365/Cys387. Arg354 contacts AMP. An IMP-binding site is contributed by Arg354. AMP-binding residues include Asn390 and Arg395. 2 residues coordinate IMP: Asn390 and Arg395. The N-linked (GlcNAc...) asparagine glycan is linked to Asn403. Position 417 (Phe417) interacts with AMP. Phe417 is a binding site for IMP. Cys476 and Cys479 are oxidised to a cystine. AMP-binding residues include Phe500 and Asp506. Positions 500 and 506 each coordinate IMP. The GPI-anchor amidated serine moiety is linked to residue Ser549. The propeptide at Ala550–Gln574 is removed in mature form.

It belongs to the 5'-nucleotidase family. As to quaternary structure, homodimer. Zn(2+) is required as a cofactor.

It localises to the cell membrane. The catalysed reaction is a ribonucleoside 5'-phosphate + H2O = a ribonucleoside + phosphate. It catalyses the reaction a 2'-deoxyribonucleoside 5'-phosphate + H2O = a 2'-deoxyribonucleoside + phosphate. It carries out the reaction dTMP + H2O = thymidine + phosphate. The enzyme catalyses CMP + H2O = cytidine + phosphate. The catalysed reaction is IMP + H2O = inosine + phosphate. It catalyses the reaction AMP + H2O = adenosine + phosphate. It carries out the reaction GMP + H2O = guanosine + phosphate. The enzyme catalyses UMP + H2O = uridine + phosphate. The catalysed reaction is dAMP + H2O = 2'-deoxyadenosine + phosphate. It catalyses the reaction dCMP + H2O = 2'-deoxycytidine + phosphate. In terms of biological role, catalyzes the hydrolysis of nucleotide monophosphates, releasing inorganic phosphate and the corresponding nucleoside, with AMP being the preferred substrate. Shows a preference for ribonucleotide monophosphates over their equivalent deoxyribose forms. Other substrates include IMP, UMP, GMP, CMP, dAMP, dCMP, dTMP, NAD and NMN. The protein is 5'-nucleotidase (NT5E) of Bos taurus (Bovine).